We begin with the raw amino-acid sequence, 163 residues long: ATP synthase subunit b 1 (163 aa).

Residues 6-26 (LAELWVAVAFLLFVGILIYVG) traverse the membrane as a helical segment.

This sequence belongs to the ATPase B chain family. As to quaternary structure, F-type ATPases have 2 components, F(1) - the catalytic core - and F(0) - the membrane proton channel. F(1) has five subunits: alpha(3), beta(3), gamma(1), delta(1), epsilon(1). F(0) has three main subunits: a(1), b(2) and c(10-14). The alpha and beta chains form an alternating ring which encloses part of the gamma chain. F(1) is attached to F(0) by a central stalk formed by the gamma and epsilon chains, while a peripheral stalk is formed by the delta and b chains.

It localises to the cell inner membrane. In terms of biological role, f(1)F(0) ATP synthase produces ATP from ADP in the presence of a proton or sodium gradient. F-type ATPases consist of two structural domains, F(1) containing the extramembraneous catalytic core and F(0) containing the membrane proton channel, linked together by a central stalk and a peripheral stalk. During catalysis, ATP synthesis in the catalytic domain of F(1) is coupled via a rotary mechanism of the central stalk subunits to proton translocation. Its function is as follows. Component of the F(0) channel, it forms part of the peripheral stalk, linking F(1) to F(0). This is ATP synthase subunit b 1 from Xanthobacter autotrophicus (strain ATCC BAA-1158 / Py2).